The chain runs to 242 residues: MATNGENGRHQEVGHKSLLQSDALYQYILETSVYPREPEPMKELREITAKHPWNIMTTSADEGQFLSMLLKLINAKNTMEIGVFTGYSLLATAMALPDDGKILAMDINRDNYEIGLPVIEKAGLAHKIEFKEGPALPVLDQMIEDGKYHGSYDFIFVDADKDNYLNYHKRLIDLVKVGGLIGYDNTLWNGSVVAPPDAPLRKYVRYYRDFVLELNKALAADSRIEICQLPVGDGITLCRRIS.

Residue lysine 16 participates in substrate binding. S-adenosyl-L-methionine contacts are provided by residues threonine 58, glutamate 80, 82–83, serine 88, aspartate 106, and alanine 135; that span reads GV. Aspartate 158 provides a ligand contact to substrate. Aspartate 158 serves as a coordination point for a divalent metal cation. Aspartate 160 is an S-adenosyl-L-methionine binding site. A divalent metal cation contacts are provided by aspartate 184 and asparagine 185. Asparagine 189 contacts substrate.

Belongs to the class I-like SAM-binding methyltransferase superfamily. Cation-dependent O-methyltransferase family. CCoAMT subfamily. The cofactor is Mg(2+). Mostly expressed in the bottom and middle parts of the stems.

The catalysed reaction is (E)-caffeoyl-CoA + S-adenosyl-L-methionine = (E)-feruloyl-CoA + S-adenosyl-L-homocysteine + H(+). It participates in aromatic compound metabolism; phenylpropanoid biosynthesis. In terms of biological role, methylates caffeoyl-CoA to feruloyl-CoA and 5-hydroxyferuloyl-CoA to sinapoyl-CoA. Plays a role in the synthesis of feruloylated polysaccharides. Involved in the reinforcement of the plant cell wall. Also involved in the responding to wounding or pathogen challenge by the increased formation of cell wall-bound ferulic acid polymers. Also methylates free caffeic and 5-hydroxyferulic acids. This is Caffeoyl-CoA O-methyltransferase 3 (CCOAOMT3) from Nicotiana tabacum (Common tobacco).